We begin with the raw amino-acid sequence, 70 residues long: Dermaseptin-PH (70 aa).

An N-terminal signal peptide occupies residues 1–22 (MDILKKSLFLILFLGVVSLSIC). Residues 23 to 44 (EEEKRENEEEMEQDDEQSEMKR) constitute a propeptide that is removed on maturation. A Glutamine amide modification is found at Gln-67. Residues 68 to 70 (GGQ) constitute a propeptide that is removed on maturation.

The protein belongs to the frog skin active peptide (FSAP) family. As to expression, expressed by the skin glands.

The protein localises to the secreted. It localises to the target cell membrane. Functionally, antimicrobial peptide which inhibits the growth of Gram-negative (MIC=16-64 uM) and Gram-positive bacteria (MIC=32 uM), and pathogenic yeast Candida albicans (MIC=16 uM). Shows a broad-spectrum of anticancer activities against several cancer cell lines. Also shows slight cytotoxicity on human dermal microvascular endothelium cells (IC(50)=4.85 uM). Induces low hemolysis against horse erythrocytes. The chain is Dermaseptin-PH from Pithecopus hypochondrialis (Orange-legged leaf frog).